Here is a 74-residue protein sequence, read N- to C-terminus: MAKKDDIIEFEGEVIDTLPNTLFKVRLENGHEIIAHISGKMRKHYIRILTGDKVKVEMTPYDLTKGRITYRGKT.

The S1-like domain occupies 1 to 73 (MAKKDDIIEF…TKGRITYRGK (73 aa)).

It belongs to the IF-1 family. In terms of assembly, component of the 30S ribosomal translation pre-initiation complex which assembles on the 30S ribosome in the order IF-2 and IF-3, IF-1 and N-formylmethionyl-tRNA(fMet); mRNA recruitment can occur at any time during PIC assembly.

The protein resides in the cytoplasm. One of the essential components for the initiation of protein synthesis. Stabilizes the binding of IF-2 and IF-3 on the 30S subunit to which N-formylmethionyl-tRNA(fMet) subsequently binds. Helps modulate mRNA selection, yielding the 30S pre-initiation complex (PIC). Upon addition of the 50S ribosomal subunit IF-1, IF-2 and IF-3 are released leaving the mature 70S translation initiation complex. In Psychrobacter sp. (strain PRwf-1), this protein is Translation initiation factor IF-1.